A 152-amino-acid chain; its full sequence is UPF0311 protein blr7842 (152 aa).

The protein belongs to the UPF0311 family.

This chain is UPF0311 protein blr7842, found in Bradyrhizobium diazoefficiens (strain JCM 10833 / BCRC 13528 / IAM 13628 / NBRC 14792 / USDA 110).